Here is a 506-residue protein sequence, read N- to C-terminus: Aluminum-activated malate transporter 7 (506 aa).

The next 6 membrane-spanning stretches (helical) occupy residues 28–48 (VGLV…YDSF), 52–72 (AMWA…ATLG), 78–98 (VAAT…ASMS), 104–124 (PILL…VRFF), 130–150 (RYDY…VSGF), and 166–186 (VIIG…VWAG). The interval 461–485 (DDGNNDDTSKNDNGSKEVSIHEKHE) is disordered. A compositionally biased stretch (basic and acidic residues) spans 467-485 (DTSKNDNGSKEVSIHEKHE).

This sequence belongs to the aromatic acid exporter (TC 2.A.85) family.

The protein resides in the membrane. Functionally, malate transporter. This Arabidopsis thaliana (Mouse-ear cress) protein is Aluminum-activated malate transporter 7 (ALMT7).